We begin with the raw amino-acid sequence, 682 residues long: E3 ubiquitin ligase Rnf157 (682 aa).

The N-myristoyl glycine moiety is linked to residue Gly-2. The RING-type; degenerate zinc finger occupies 277-317 (CVVCLSDVRDTLILPCRHCASCNVHCADTLRYQANNCPICR). The short motif at 330 to 333 (RKKL) is the D-box 1 element. 2 disordered regions span residues 440 to 604 (QNSS…VQED) and 655 to 682 (NTQR…PLAV). The span at 479-538 (ESENLTLSSSGAVDQSSCTGTPLSSTISSPEDPASSSLAQSVMSMASSQISTDTVSSMSG) shows a compositional bias: polar residues. The span at 585 to 597 (QDAEGNDIMEEED) shows a compositional bias: acidic residues. Residues 658–661 (RRRL) carry the D-box 2 motif. A phosphoserine mark is found at Ser-662, Ser-664, and Ser-665.

In terms of assembly, interacts with APBB1. Interacts with CHD1; CHD1-binding controls RNF157 stability. Also interacts with ATRN, MEGF8, TECR, MSI2, PLRG1, BYSL, MTERF3, PSMA1, MRPS18B, PRPF4, FASTKD2, SLC25A1, SMU1, CNOT9, MRPS2, MAGT1, FXR2, EMD, PSMD8, HDAC1, RAN, HSD17B12, TXNDC5 and MRPL19. Predominantly expressed in the brain.

The protein resides in the cytoplasm. The enzyme catalyses S-ubiquitinyl-[E2 ubiquitin-conjugating enzyme]-L-cysteine + [acceptor protein]-L-lysine = [E2 ubiquitin-conjugating enzyme]-L-cysteine + N(6)-ubiquitinyl-[acceptor protein]-L-lysine.. E3 ubiquitin ligase that ubiquitinates APBB1 for its degradation by the proteasome and thus prevents apoptosis and promotes survival of neurons. Has a dual role in neurons as it is also required for dendrite growth and maintenance for which its ligase activity is not critical. May act as a scaffold molecule to regulate this process. Acts as a downstream effector of the interconnected PI3K and MAPK signaling pathways and thus participates in the regulation of the cell cycle. The protein is E3 ubiquitin ligase Rnf157 (Rnf157) of Rattus norvegicus (Rat).